Reading from the N-terminus, the 99-residue chain is Malonate decarboxylase acyl carrier protein (99 aa).

An O-(phosphoribosyl dephospho-coenzyme A)serine modification is found at Ser-25.

Belongs to the MdcC family. Post-translationally, covalently binds the prosthetic group of malonate decarboxylase.

The protein localises to the cytoplasm. In terms of biological role, subunit of malonate decarboxylase, it is an acyl carrier protein to which acetyl and malonyl thioester residues are bound via a 2'-(5''-phosphoribosyl)-3'-dephospho-CoA prosthetic group and turn over during the catalytic mechanism. This Stutzerimonas stutzeri (strain A1501) (Pseudomonas stutzeri) protein is Malonate decarboxylase acyl carrier protein.